The primary structure comprises 733 residues: Photosystem I P700 chlorophyll a apoprotein A2 (733 aa).

A run of 8 helical transmembrane segments spans residues 46–69 (IFAS…FHVA), 134–157 (LYLG…LHLQ), 174–198 (LNHH…HVAL), 272–290 (IAHH…GHMY), 329–352 (LHIQ…QHMY), 368–394 (AALY…IFFV), 416–438 (AIIS…LYIH), and 516–534 (FLVH…LILV). Residues C558 and C567 each coordinate [4Fe-4S] cluster. 2 helical membrane-spanning segments follow: residues 574–595 (AFYL…YWHW) and 642–664 (LSVW…MFLI). The chlorophyll a site is built by H653, M661, and Y669. W670 contributes to the phylloquinone binding site. Residues 706–726 (LVGLVHFAVGYILTYAAFVIA) traverse the membrane as a helical segment.

Belongs to the PsaA/PsaB family. The PsaA/B heterodimer binds the P700 chlorophyll special pair and subsequent electron acceptors. PSI consists of a core antenna complex that captures photons, and an electron transfer chain that converts photonic excitation into a charge separation. The eukaryotic PSI reaction center is composed of at least 11 subunits. Requires P700 is a chlorophyll a/chlorophyll a' dimer, A0 is one or more chlorophyll a, A1 is one or both phylloquinones and FX is a shared 4Fe-4S iron-sulfur center. as cofactor.

The protein localises to the plastid. It is found in the chloroplast thylakoid membrane. It catalyses the reaction reduced [plastocyanin] + hnu + oxidized [2Fe-2S]-[ferredoxin] = oxidized [plastocyanin] + reduced [2Fe-2S]-[ferredoxin]. Functionally, psaA and PsaB bind P700, the primary electron donor of photosystem I (PSI), as well as the electron acceptors A0, A1 and FX. PSI is a plastocyanin/cytochrome c6-ferredoxin oxidoreductase, converting photonic excitation into a charge separation, which transfers an electron from the donor P700 chlorophyll pair to the spectroscopically characterized acceptors A0, A1, FX, FA and FB in turn. Oxidized P700 is reduced on the lumenal side of the thylakoid membrane by plastocyanin or cytochrome c6. The sequence is that of Photosystem I P700 chlorophyll a apoprotein A2 from Trieres chinensis (Marine centric diatom).